Here is a 298-residue protein sequence, read N- to C-terminus: uncharacterized protein (298 aa).

Residues 5 to 62 enclose the HTH lysR-type domain; it reads TSLSAMRIFEAAARLGSFRAAAEELNLSPSAVSHAIMRLERDLGVALFERTTRSVSLT. The segment at residues 22-42 is a DNA-binding region (H-T-H motif); sequence FRAAAEELNLSPSAVSHAIMR.

It belongs to the LysR transcriptional regulatory family.

This is an uncharacterized protein from Sinorhizobium fredii (strain NBRC 101917 / NGR234).